The chain runs to 1074 residues: Formin-G (1074 aa).

In terms of domain architecture, GBD/FH3 spans 34-423 (LQMQQGSKTY…DKINEFEKKI (390 aa)). 2 disordered regions span residues 476–507 (QSIS…DIQS) and 549–639 (FTPT…NPSS). A compositionally biased stretch (low complexity) spans 481-503 (SQDSSNNQKASSSSSNTSTLNDS). Residues 502-530 (DSDIQSIQSSLKEATLEIERLKLAIEEKM) are a coiled coil. Residues 549-561 (FTPTSPDISNDGQ) are compositionally biased toward polar residues. The span at 568–610 (APPPSPSPPPPISGGGAPPPPPPPPPPPSGGGAPPPPPPPPPS) shows a compositional bias: pro residues. In terms of domain architecture, FH1 spans 597–623 (GGGAPPPPPPPPPSGGKKAGAPGAPPT). In terms of domain architecture, FH2 spans 631-1031 (NKPVINPSSK…ASGDNGAVQN (401 aa)). Positions 914 to 971 (DINDLEKQFNISKNNCKKVLEANIPSSSKFQSTIGSFLEKTEIDIKNLKENQKNIVDS) form a coiled coil. The DAD domain occupies 1037–1073 (GADPLAALANAIKLGQTGLRKRPGPENSSGGSQLNLN). The disordered stretch occupies residues 1053 to 1074 (TGLRKRPGPENSSGGSQLNLNK). Positions 1062-1074 (ENSSGGSQLNLNK) are enriched in polar residues.

Belongs to the formin homology family. Diaphanous subfamily. As to quaternary structure, interacts (via GBD/FH3 domain) with activated Rho-GTPases.

Functionally, formins play an important role in the nucleation of actin and the formation of linear actin filaments. In Dictyostelium discoideum (Social amoeba), this protein is Formin-G (forG).